A 446-amino-acid chain; its full sequence is tRNA modification GTPase MnmE (446 aa).

(6S)-5-formyl-5,6,7,8-tetrahydrofolate is bound by residues Arg24, Glu81, and Lys120. One can recognise a TrmE-type G domain in the interval Gly216–Leu368. Residue Asn226 coordinates K(+). Residues Asn226 to Ser231, Thr245 to Thr251, and Asp270 to Gly273 contribute to the GTP site. Position 230 (Ser230) interacts with Mg(2+). K(+) is bound by residues Thr245, Val247, and Thr250. Thr251 contacts Mg(2+). Lys446 lines the (6S)-5-formyl-5,6,7,8-tetrahydrofolate pocket.

Belongs to the TRAFAC class TrmE-Era-EngA-EngB-Septin-like GTPase superfamily. TrmE GTPase family. Homodimer. Heterotetramer of two MnmE and two MnmG subunits. K(+) is required as a cofactor.

It localises to the cytoplasm. Functionally, exhibits a very high intrinsic GTPase hydrolysis rate. Involved in the addition of a carboxymethylaminomethyl (cmnm) group at the wobble position (U34) of certain tRNAs, forming tRNA-cmnm(5)s(2)U34. This chain is tRNA modification GTPase MnmE, found in Xanthomonas oryzae pv. oryzae (strain KACC10331 / KXO85).